Consider the following 190-residue polypeptide: dCTP deaminase (190 aa).

113–118 is a binding site for dCTP; that stretch reads KSTYAR. Glutamate 139 serves as the catalytic Proton donor/acceptor. DCTP-binding residues include glutamine 158, tyrosine 172, lysine 181, and glutamine 182.

The protein belongs to the dCTP deaminase family. As to quaternary structure, homotrimer.

The catalysed reaction is dCTP + H2O + H(+) = dUTP + NH4(+). It functions in the pathway pyrimidine metabolism; dUMP biosynthesis; dUMP from dCTP (dUTP route): step 1/2. In terms of biological role, catalyzes the deamination of dCTP to dUTP. This is dCTP deaminase from Chlamydia muridarum (strain MoPn / Nigg).